The sequence spans 170 residues: Helix-loop-helix protein 3 (170 aa).

Residues 1–26 (MTASTSSTPSTSTKIPSSSKSSVTKQ) show a composition bias toward low complexity. Disordered regions lie at residues 1–42 (MTAS…VDQV) and 118–170 (TPSP…TETY). The interval 26–39 (QTKQKRNERERKRV) is basic motif; degenerate. The bHLH domain occupies 26–79 (QTKQKRNERERKRVDQVNQGFVLLQERVPKAAGNKAKLSKVETLREAARYIQEL). A compositionally biased stretch (basic and acidic residues) spans 30–40 (KRNERERKRVD). The segment at 40–79 (DQVNQGFVLLQERVPKAAGNKAKLSKVETLREAARYIQEL) is helix-loop-helix motif. Positions 143-157 (SHYYQESSSSSASTS) are enriched in low complexity.

In terms of assembly, efficient DNA binding requires dimerization with another bHLH protein. Forms a heterodimer with hlh-2. As to expression, expressed in the ADL sensory neurons.

It localises to the nucleus. Functionally, probable transcriptional regulator. May mediate transcriptional activation by binding to the E-box motif 5'-CANNTG-3'. Plays a role in the differentiation of the hermaphrodite-specific motor neurons (HSN) that are required for normal egg laying. Might play a role in serotonin production by regulating expression of the tryptophan hydrolase tph-1 which catalyzes serotonin synthesis, in the HSN neurons. Also plays a role in HSN axon guidance towards the vulva and the ventral nerve cord, possibly by promoting the expression of the netrin receptor unc-40. Under feeding conditions, involved in the regulation of the srh-234 chemoreceptor encoding gene expression in the ADL sensory neurons. Together with hlh-2, involved in the induction of programmed cell death in the sister cells of the serotonergic neurosecretory motor (NSM) neurons, probably through the activation of egl-1 transcription. The polypeptide is Helix-loop-helix protein 3 (Caenorhabditis elegans).